The chain runs to 123 residues: Histone H2B 2 (123 aa).

The disordered stretch occupies residues 1–32; sequence MAPPKPSAKGAKKAAKTVTKPKDGKKRRHARK. O-linked (GlcNAc) serine glycosylation is present at S110. Residue K118 forms a Glycyl lysine isopeptide (Lys-Gly) (interchain with G-Cter in ubiquitin) linkage.

This sequence belongs to the histone H2B family. In terms of assembly, the nucleosome is a histone octamer containing two molecules each of H2A, H2B, H3 and H4 assembled in one H3-H4 heterotetramer and two H2A-H2B heterodimers. The octamer wraps approximately 147 bp of DNA. In terms of processing, monoubiquitination of Lys-118 gives a specific tag for epigenetic transcriptional activation and is also prerequisite for histone H3 'Lys-4' and 'Lys-79' methylation. GlcNAcylation at Ser-110 promotes monoubiquitination of Lys-118. It fluctuates in response to extracellular glucose, and associates with transcribed genes.

It localises to the nucleus. Its subcellular location is the chromosome. In terms of biological role, core component of nucleosome. Nucleosomes wrap and compact DNA into chromatin, limiting DNA accessibility to the cellular machineries which require DNA as a template. Histones thereby play a central role in transcription regulation, DNA repair, DNA replication and chromosomal stability. DNA accessibility is regulated via a complex set of post-translational modifications of histones, also called histone code, and nucleosome remodeling. In Caenorhabditis elegans, this protein is Histone H2B 2 (his-4).